Here is a 547-residue protein sequence, read N- to C-terminus: ATP synthase subunit beta, mitochondrial (547 aa).

The N-terminal 45 residues, 1–45 (MASRRLLSSFLRSSTRRSLRPSFSNPRPSFLTSYCSSPASILRRY), are a transit peptide targeting the mitochondrion. Low complexity predominate over residues 52–62 (KEPAASKPAGT). Positions 52-74 (KEPAASKPAGTAGTGKGTITDEK) are disordered. 226–233 (GGDWVGKT) lines the ATP pocket.

Belongs to the ATPase alpha/beta chains family. F-type ATPases have 2 components, CF(1) - the catalytic core - and CF(0) - the membrane proton channel. CF(1) has five subunits: alpha(3), beta(3), gamma(1), delta(1), epsilon(1). CF(0) has three main subunits: a, b and c.

The protein resides in the mitochondrion. Its subcellular location is the mitochondrion inner membrane. The catalysed reaction is ATP + H2O + 4 H(+)(in) = ADP + phosphate + 5 H(+)(out). Functionally, mitochondrial membrane ATP synthase (F(1)F(0) ATP synthase or Complex V) produces ATP from ADP in the presence of a proton gradient across the membrane which is generated by electron transport complexes of the respiratory chain. F-type ATPases consist of two structural domains, F(1) - containing the extramembraneous catalytic core, and F(0) - containing the membrane proton channel, linked together by a central stalk and a peripheral stalk. During catalysis, ATP synthesis in the catalytic domain of F(1) is coupled via a rotary mechanism of the central stalk subunits to proton translocation. Subunits alpha and beta form the catalytic core in F(1). Rotation of the central stalk against the surrounding alpha(3)beta(3) subunits leads to hydrolysis of ATP in three separate catalytic sites on the beta subunits. This chain is ATP synthase subunit beta, mitochondrial (ATPB), found in Daucus carota (Wild carrot).